A 397-amino-acid chain; its full sequence is Mannosylglycerate synthase (397 aa).

GDP-alpha-D-mannose contacts are provided by residues Pro7–Glu11, Ile35, Gln66, Lys76, Asp100, and Asp100–Ala101. Asp102 provides a ligand contact to a divalent metal cation. Residues Arg131 and Ala136–Thr139 contribute to the (R)-glycerate site. Positions 163 and 192 each coordinate GDP-alpha-D-mannose. An a divalent metal cation-binding site is contributed by His217. Residues Arg218 and Tyr220 each contribute to the GDP-alpha-D-mannose site.

This sequence belongs to the glycosyltransferase 78 family. In terms of assembly, homotetramer. Dimer of dimers. It depends on Mg(2+) as a cofactor. The cofactor is Ca(2+). Requires Mn(2+) as cofactor. Ni(2+) is required as a cofactor. Co(2+) serves as cofactor.

It carries out the reaction (R)-glycerate + GDP-alpha-D-mannose = (2R)-2-O-(alpha-D-mannosyl)-glycerate + GDP + H(+). With respect to regulation, inhibited by GDP. In terms of biological role, involved in the biosynthesis of the stress protectant 2-O-alpha-D-mannosyl glycerate (MG) which is produced in response to growth at supraoptimal temperature and salinity, and protects several enzymes against inactivation by temperature, freeze-drying and osmotic stress. Catalyzes the condensation of alpha-GDP-D-mannose (GDP-Man) with D-glycerate to produce alpha-mannosyl-D-glycerate. It is specific for GDP-Man, but it can also use alpha-GDP-D-glucose (GDP-Glc), beta-GDP-D-fructose, alpha-UDP-D-mannose and alpha-UDP-D-glucose as sugar donors. It is specific for D-glycerate, but it can also use D-lactate and glycolate as sugar acceptors. This reaction occurs with a net retention of anomeric configuration; the newly formed glycosidic linkage has the same alpha configuration as the sugar donor. In Rhodothermus marinus (Rhodothermus obamensis), this protein is Mannosylglycerate synthase (mgs).